The primary structure comprises 386 residues: Nucleosome assembly protein 1-like 4 (386 aa).

The tract at residues 1–29 is disordered; the sequence is MADNSFSDGVPSDSLEAAKNASNTEKLTD. A2 carries the N-acetylalanine modification. S5, S7, and S12 each carry phosphoserine. The span at 20–29 shows a compositional bias: polar residues; sequence NASNTEKLTD. S49 is modified (phosphoserine). T51 carries the phosphothreonine modification. Phosphoserine occurs at positions 53 and 54. T58 carries the post-translational modification Phosphothreonine. An N6-acetyllysine modification is found at K105. Residue S125 is modified to Phosphoserine. N6-acetyllysine is present on K146. The Nuclear localization signal signature appears at 265–271; it reads IKKKQKH. S304 is subject to Phosphoserine. Residues 339 to 370 are compositionally biased toward acidic residues; that stretch reads AIEDDDNFEEGEEGEEEELEGDEEAEDDDDAE. The segment at 339 to 386 is disordered; the sequence is AIEDDDNFEEGEEGEEEELEGDEEAEDDDDAEINPKKEPSQPSECKQQ.

Belongs to the nucleosome assembly protein (NAP) family. In terms of assembly, interacts with core (H2A, H2B, H3, H4) and linker (H1) histones. Post-translationally, polyglutamylated and polyglycylated. These 2 modifications occur exclusively on glutamate residues and result in either polyglutamate or polyglycine chains on the gamma-carboxyl group. Both modifications can coexist on the same protein on adjacent residues, and lowering polyglycylation levels increases polyglutamylation, and reciprocally. Polyglutamylated by TTLL4. In terms of processing, phosphorylated at the G0/G1 boundary but it is not phosphorylated in S-phase. Phosphorylated protein remains in the cytoplasm in a complex with histones during the G0/G1 transition, whereas dephosphorylation triggers its transport into the nucleus at the G1/S-boundary.

The protein localises to the nucleus. The protein resides in the cytoplasm. In terms of biological role, acts as a histone chaperone in nucleosome assembly. In Bos taurus (Bovine), this protein is Nucleosome assembly protein 1-like 4 (NAP1L4).